Reading from the N-terminus, the 218-residue chain is Ribosomal RNA small subunit methyltransferase G (218 aa).

S-adenosyl-L-methionine contacts are provided by residues Gly86, Leu91, 137–138, and Arg153; that span reads AE.

The protein belongs to the methyltransferase superfamily. RNA methyltransferase RsmG family.

Its subcellular location is the cytoplasm. It carries out the reaction guanosine(527) in 16S rRNA + S-adenosyl-L-methionine = N(7)-methylguanosine(527) in 16S rRNA + S-adenosyl-L-homocysteine. Its function is as follows. Specifically methylates the N7 position of guanine in position 527 of 16S rRNA. This is Ribosomal RNA small subunit methyltransferase G from Nitratidesulfovibrio vulgaris (strain ATCC 29579 / DSM 644 / CCUG 34227 / NCIMB 8303 / VKM B-1760 / Hildenborough) (Desulfovibrio vulgaris).